A 409-amino-acid chain; its full sequence is MSAPAPVVVTGLGIVAPNGTGTEEYWAATLAGKSGIDVIQRFDPHGYPVRVGGEVLAFDAAAHLPGRLLPQTDRMTQHALVAAEWALADAGLEPEKQDEYGLGVLTAAGAGGFEFGQREMQKLWGTGPERVSAYQSFAWFYAVNTGQISIRHGMRGHSSVFVTEQAGGLDAAAHAARLLRKGTLNTALTGGCEASLCPWGLVAQIPSGFLSEATDPHDAYLPFDARAAGYVPGEGGAMLVAERADSARERDAATVYGRIAGHASTFDARPGTGRPTGPARAIRLALEEARVAPEDVDVVYADAAGVPALDRAEAEALAEVFGPGAVPVTAPKTMTGRLYAGGAALDVATALLSIRDCVVPPTVGTGAPAPGLGIDLVLHQPRELRVDTALVVARGMGGFNSALVVRRHG.

The 404-residue stretch at 4–407 (PAPVVVTGLG…GFNSALVVRR (404 aa)) folds into the Ketosynthase family 3 (KS3) domain.

This sequence belongs to the thiolase-like superfamily. Beta-ketoacyl-ACP synthases family. In terms of assembly, the tetracenomycin polyketide synthase (TCM PKS) is composed of a ketosynthase complex (TcmKL), an acyl carrier protein (TcmM), a cyclase (TcmN) and a probable second cyclase (TcmJ). TcmK and TcmL form a heterodimeric complex.

It catalyses the reaction 10 malonyl-CoA + 8 H(+) = tetracenomycin F2 + 10 CO2 + 10 CoA + 2 H2O. Its pathway is antibiotic biosynthesis; tetracenomycin C biosynthesis. Functionally, involved in the biosynthesis of tetracenomycin C (TCM C). Part of a type II polyketide synthase (PKS) that catalyzes the synthesis of tetracenomycin F2 (TCM F2), a precursor of TCM C, from malonyl-CoA. TcmK and TcmL form a heterodimeric alpha-beta complex that catalyzes the condensation reactions between the growing acyl-enzyme chain and the malonyl-CoA extender units. This chain is Tetracenomycin polyketide synthase ketoacyl synthase beta subunit, found in Streptomyces glaucescens.